The following is a 203-amino-acid chain: MAYTLPQLPYAYDALEPNIDAQTMEIHHTKHHQTYINNVNAALEGTEYADLPVEELVSKLKSLPENLQGPVRNNGGGHANHSLFWTVMSPNGGGEPKGEVAKAIDKDIGGFEKFKEAFTKAALSRFGSGWAWLSVTPDKKVVVESTANQDSPLFEGNTPILGLDVWEHAYYLKYQNRRPDYIGAFYNVVNWDEVERRYHAAIA.

H27, H81, D164, and H168 together coordinate Mn(2+).

This sequence belongs to the iron/manganese superoxide dismutase family. Mn(2+) serves as cofactor.

The catalysed reaction is 2 superoxide + 2 H(+) = H2O2 + O2. Functionally, destroys superoxide anion radicals which are normally produced within the cells and which are toxic to biological systems. In Xanthomonas campestris pv. campestris (strain 8004), this protein is Superoxide dismutase [Mn] (sodA).